Here is a 177-residue protein sequence, read N- to C-terminus: Nucleoside triphosphate/diphosphate phosphatase (177 aa).

Arg-23 functions as the Proton donor in the catalytic mechanism. 6 residues coordinate Mg(2+): Asn-87, Asp-103, Asp-105, Asp-107, Asp-120, and Glu-123.

It belongs to the Ntdp family. Mg(2+) serves as cofactor.

It catalyses the reaction a ribonucleoside 5'-triphosphate + H2O = a ribonucleoside 5'-diphosphate + phosphate + H(+). The catalysed reaction is a ribonucleoside 5'-diphosphate + H2O = a ribonucleoside 5'-phosphate + phosphate + H(+). Has nucleoside phosphatase activity towards nucleoside triphosphates and nucleoside diphosphates. This chain is Nucleoside triphosphate/diphosphate phosphatase, found in Streptococcus mutans serotype c (strain ATCC 700610 / UA159).